A 352-amino-acid chain; its full sequence is Histidinol-phosphate aminotransferase (352 aa).

K211 is modified (N6-(pyridoxal phosphate)lysine).

This sequence belongs to the class-II pyridoxal-phosphate-dependent aminotransferase family. Histidinol-phosphate aminotransferase subfamily. As to quaternary structure, homodimer. Requires pyridoxal 5'-phosphate as cofactor.

It catalyses the reaction L-histidinol phosphate + 2-oxoglutarate = 3-(imidazol-4-yl)-2-oxopropyl phosphate + L-glutamate. It participates in amino-acid biosynthesis; L-histidine biosynthesis; L-histidine from 5-phospho-alpha-D-ribose 1-diphosphate: step 7/9. In Haemophilus influenzae (strain PittGG), this protein is Histidinol-phosphate aminotransferase.